A 341-amino-acid chain; its full sequence is Biotin synthase (341 aa).

The Radical SAM core domain occupies 43–266 (SEIQLSQLLS…IAVARIVCPK (224 aa)). Positions 58, 62, and 65 each coordinate [4Fe-4S] cluster. [2Fe-2S] cluster-binding residues include Cys102, Cys133, Cys193, and Arg270.

Belongs to the radical SAM superfamily. Biotin synthase family. As to quaternary structure, homodimer. The cofactor is [4Fe-4S] cluster. [2Fe-2S] cluster is required as a cofactor.

The enzyme catalyses (4R,5S)-dethiobiotin + (sulfur carrier)-SH + 2 reduced [2Fe-2S]-[ferredoxin] + 2 S-adenosyl-L-methionine = (sulfur carrier)-H + biotin + 2 5'-deoxyadenosine + 2 L-methionine + 2 oxidized [2Fe-2S]-[ferredoxin]. The protein operates within cofactor biosynthesis; biotin biosynthesis; biotin from 7,8-diaminononanoate: step 2/2. Its function is as follows. Catalyzes the conversion of dethiobiotin (DTB) to biotin by the insertion of a sulfur atom into dethiobiotin via a radical-based mechanism. In Caulobacter vibrioides (strain ATCC 19089 / CIP 103742 / CB 15) (Caulobacter crescentus), this protein is Biotin synthase.